Here is a 299-residue protein sequence, read N- to C-terminus: MLRGIQALSRPLTRVYRALAVIGVLAASLLASWVGAVPQVGLAASALPTFAHVVIVVEENRSQAAIIGNKSAPFINSLAANGAMMAQAFAETHPSEPNYLALFAGNTFGLTKNTCPVNGGALPNLGSELLSAGYTFMGFAEDLPAVGSTVCSAGKYARKHVPWVNFSNVPTTLSVPFSAFPKPQNYPGLPTVSFVIPNADNDMHDGSIAQGDAWLNRHLSAYANWAKTNNSLLVVTWDEDDGSSRNQIPTVFYGAHVRPGTYNETISHYNVLSTLEQIYGLPKTGYATNAPPITDIWGD.

A signal peptide spans 1 to 43 (MLRGIQALSRPLTRVYRALAVIGVLAASLLASWVGAVPQVGLA).

Monomer. SapM interacts with host RAB7 via its C-terminus. The cofactor is a metal cation.

It is found in the secreted. The protein localises to the host cytoplasmic vesicle. It localises to the host phagosome. The enzyme catalyses a phosphate monoester + H2O = an alcohol + phosphate. It carries out the reaction a 1,2-diacyl-sn-glycero-3-phospho-(1D-myo-inositol-3-phosphate) + H2O = a 1,2-diacyl-sn-glycero-3-phospho-(1D-myo-inositol) + phosphate. Phosphatase activity is inhibited in vitro by low concentrations of several heavy metals (zinc chloride, sodium molybdate, magnesium chloride, and copper sulfate) and moderately high concentrations (&gt;8 mM) of EDTA. Its function is as follows. Virulence factor that plays an important role in blocking phagosome-lysosome fusion and thus participates in the intracellular survival of the pathogen. Acts as a phosphatase that dephosphorylates phosphatidylinositol 3-phosphate (PI3P), a membrane trafficking regulatory lipid essential for phagosomal acquisition of lysosomal constituents. Therefore, SapM eliminates PI3P from the phagosomal membrane by catalyzing its hydrolysis, and thus contributes to inhibition of phagosome maturation. Also interferes with autophagy: SapM blocks autophagosome-lysosome fusion in macrophages by binding to the small GTPase RAB7, which prevents RAB7 from being involved in this process and thus negatively regulates autophagy flux. In vitro, displays phosphatase activity with broad specificity; can dephosphorylate a variety of phosphoester substrates, with the highest activity against phosphoenolpyruvate, glycerophosphate, GTP, NADPH, phosphotyrosine and trehalose-6-phosphate. In contrast, the enzyme exhibits poor activity against glucose-6-phosphate, phosphothreonine, and a number of nucleotides (NADP, ATP, AMP, and GMP). In Mycobacterium tuberculosis (strain ATCC 25618 / H37Rv), this protein is Phosphatidylinositol-3-phosphatase.